The sequence spans 106 residues: ATP-dependent Clp protease adapter protein ClpS (106 aa).

It belongs to the ClpS family. As to quaternary structure, binds to the N-terminal domain of the chaperone ClpA.

In terms of biological role, involved in the modulation of the specificity of the ClpAP-mediated ATP-dependent protein degradation. The polypeptide is ATP-dependent Clp protease adapter protein ClpS (Citrobacter koseri (strain ATCC BAA-895 / CDC 4225-83 / SGSC4696)).